We begin with the raw amino-acid sequence, 147 residues long: uncharacterized protein (147 aa).

Residues 1 to 137 form the HTH marR-type domain; that stretch reads MRDNTIGSLI…LYELMTKVHK (137 aa). The H-T-H motif DNA-binding region spans 53–76; the sequence is QMELAEKVTVTQGGISRMLTRLEK.

This is an uncharacterized protein from Bacillus anthracis.